The sequence spans 1377 residues: DNA-directed RNA polymerase subunit beta (1377 aa).

The protein belongs to the RNA polymerase beta chain family. The RNAP catalytic core consists of 2 alpha, 1 beta, 1 beta' and 1 omega subunit. When a sigma factor is associated with the core the holoenzyme is formed, which can initiate transcription.

It catalyses the reaction RNA(n) + a ribonucleoside 5'-triphosphate = RNA(n+1) + diphosphate. DNA-dependent RNA polymerase catalyzes the transcription of DNA into RNA using the four ribonucleoside triphosphates as substrates. This Brucella melitensis biotype 2 (strain ATCC 23457) protein is DNA-directed RNA polymerase subunit beta.